We begin with the raw amino-acid sequence, 579 residues long: 2-isopropylmalate synthase (579 aa).

The 275-residue stretch at 40-314 (PRWCAVDLRD…DPMIDFSDID (275 aa)) folds into the Pyruvate carboxyltransferase domain. Residues aspartate 49, histidine 253, histidine 255, and asparagine 289 each contribute to the Mg(2+) site. Residues 456–579 (SGKADGQWGR…VNRAIRDAQS (124 aa)) are regulatory domain.

It belongs to the alpha-IPM synthase/homocitrate synthase family. LeuA type 2 subfamily. As to quaternary structure, homodimer. Mg(2+) serves as cofactor.

It is found in the cytoplasm. The catalysed reaction is 3-methyl-2-oxobutanoate + acetyl-CoA + H2O = (2S)-2-isopropylmalate + CoA + H(+). The protein operates within amino-acid biosynthesis; L-leucine biosynthesis; L-leucine from 3-methyl-2-oxobutanoate: step 1/4. Its function is as follows. Catalyzes the condensation of the acetyl group of acetyl-CoA with 3-methyl-2-oxobutanoate (2-ketoisovalerate) to form 3-carboxy-3-hydroxy-4-methylpentanoate (2-isopropylmalate). The chain is 2-isopropylmalate synthase from Pseudarthrobacter chlorophenolicus (strain ATCC 700700 / DSM 12829 / CIP 107037 / JCM 12360 / KCTC 9906 / NCIMB 13794 / A6) (Arthrobacter chlorophenolicus).